We begin with the raw amino-acid sequence, 310 residues long: Aspartate carbamoyltransferase catalytic subunit (310 aa).

2 residues coordinate carbamoyl phosphate: R55 and T56. An L-aspartate-binding site is contributed by K83. Residues R105, H136, and Q139 each contribute to the carbamoyl phosphate site. The L-aspartate site is built by R169 and R223. Positions 264 and 265 each coordinate carbamoyl phosphate.

The protein belongs to the aspartate/ornithine carbamoyltransferase superfamily. ATCase family. As to quaternary structure, heterododecamer (2C3:3R2) of six catalytic PyrB chains organized as two trimers (C3), and six regulatory PyrI chains organized as three dimers (R2).

The enzyme catalyses carbamoyl phosphate + L-aspartate = N-carbamoyl-L-aspartate + phosphate + H(+). Its pathway is pyrimidine metabolism; UMP biosynthesis via de novo pathway; (S)-dihydroorotate from bicarbonate: step 2/3. In terms of biological role, catalyzes the condensation of carbamoyl phosphate and aspartate to form carbamoyl aspartate and inorganic phosphate, the committed step in the de novo pyrimidine nucleotide biosynthesis pathway. The polypeptide is Aspartate carbamoyltransferase catalytic subunit (Saccharopolyspora erythraea (strain ATCC 11635 / DSM 40517 / JCM 4748 / NBRC 13426 / NCIMB 8594 / NRRL 2338)).